The following is a 132-amino-acid chain: Translation initiation factor 5A (132 aa).

K36 carries the post-translational modification Hypusine.

Belongs to the eIF-5A family.

The protein resides in the cytoplasm. In terms of biological role, functions by promoting the formation of the first peptide bond. This chain is Translation initiation factor 5A (eIF5A), found in Pyrobaculum arsenaticum (strain DSM 13514 / JCM 11321 / PZ6).